We begin with the raw amino-acid sequence, 186 residues long: Casparian strip membrane protein 1 (186 aa).

The Cytoplasmic segment spans residues 1–26 (MKSSPAELISEAKSSTQNSKMKRAVS). Residues 27 to 47 (VLDFILRLIAVVATLASAIAM) traverse the membrane as a helical segment. Over 48–74 (GTTDESLPFFTQFIRFRAEYDDLPTLR) the chain is Extracellular. The helical transmembrane segment at 75 to 95 (LFVVASAFASGYLILSLPLSI) threads the bilayer. Topologically, residues 96-107 (LHITRSSARRTR) are cytoplasmic. The helical transmembrane segment at 108–128 (VILIILDMVMLTSLTAASSAA) threads the bilayer. Over 129 to 161 (AAIVYLAHKGNAKANWFAFCQQYDSFCERISGS) the chain is Extracellular. A helical membrane pass occupies residues 162 to 182 (LIGSFIAIPLFIMLILFSALV). Residues 183–186 (LSKR) lie on the Cytoplasmic side of the membrane.

Belongs to the Casparian strip membrane proteins (CASP) family. As to quaternary structure, homodimer and heterodimers.

It is found in the cell membrane. In terms of biological role, regulates membrane-cell wall junctions and localized cell wall deposition. Required for establishment of the Casparian strip membrane domain (CSD) and the subsequent formation of Casparian strips, a cell wall modification of the root endodermis that determines an apoplastic barrier between the intraorganismal apoplasm and the extraorganismal apoplasm and prevents lateral diffusion. The protein is Casparian strip membrane protein 1 of Lotus japonicus (Lotus corniculatus var. japonicus).